A 182-amino-acid chain; its full sequence is T-cell surface glycoprotein CD3 gamma chain (182 aa).

Residues 1–22 (MEQGKGLAVLILAIILLQGTLA) form the signal peptide. The Extracellular portion of the chain corresponds to 23 to 116 (QSIKGNHLVK…CIELNAATIS (94 aa)). Residues 37 to 94 (QEDGSVLLTCDAEAKNITWFKDGKMIGFLTEDKKKWNLGSNAKDPRGMYQCKGSQNKS) form the Ig-like domain. A disulfide bridge connects residues Cys46 and Cys87. Asn52 and Asn92 each carry an N-linked (GlcNAc...) asparagine glycan. A helical transmembrane segment spans residues 117-137 (GFLFAEIVSIFVLAVGVYFIA). Over 138 to 182 (GQDGVRQSRASDKQTLLPNDQLYQPLKDREDDQYSHLQGNQLRRN) the chain is Cytoplasmic. Ser145 carries the post-translational modification Phosphoserine. At Ser148 the chain carries Phosphoserine; by PKC. An ITAM domain is found at 149 to 177 (DKQTLLPNDQLYQPLKDREDDQYSHLQGN). Residues 153-154 (LL) carry the Di-leucine motif motif.

In terms of assembly, the TCR-CD3 complex is composed of a CD3D/CD3E and a CD3G/CD3E heterodimers that preferentially associate with TCRalpha and TCRbeta, respectively, to form TCRalpha/CD3E/CD3G and TCRbeta/CD3G/CD3E trimers. In turn, the hexamer interacts with CD3Z homodimer to form the TCR-CD3 complex. Alternatively, TCRalpha and TCRbeta can be replaced by TCRgamma and TCRdelta. Post-translationally, phosphorylated on Tyr residues after T-cell receptor triggering by LCK in association with CD4/CD8. Phosphorylated also by PKC; leading to the TCR complex down-regulation. Phosphorylated on Tyr residues after T-cell receptor triggering by LCK in association with CD4/CD8.

It is found in the cell membrane. Part of the TCR-CD3 complex present on T-lymphocyte cell surface that plays an essential role in adaptive immune response. When antigen presenting cells (APCs) activate T-cell receptor (TCR), TCR-mediated signals are transmitted across the cell membrane by the CD3 chains CD3D, CD3E, CD3G and CD3Z. All CD3 chains contain immunoreceptor tyrosine-based activation motifs (ITAMs) in their cytoplasmic domain. Upon TCR engagement, these motifs become phosphorylated by Src family protein tyrosine kinases LCK and FYN, resulting in the activation of downstream signaling pathways. In addition to this role of signal transduction in T-cell activation, CD3G plays an essential role in the dynamic regulation of TCR expression at the cell surface. Indeed, constitutive TCR cycling is dependent on the di-leucine-based (diL) receptor-sorting motif present in CD3G. This is T-cell surface glycoprotein CD3 gamma chain (CD3G) from Homo sapiens (Human).